A 323-amino-acid chain; its full sequence is o-succinylbenzoate synthase (323 aa).

Catalysis depends on lysine 134, which acts as the Proton donor. Mg(2+) contacts are provided by aspartate 162, glutamate 191, and aspartate 214. Catalysis depends on lysine 236, which acts as the Proton acceptor.

Belongs to the mandelate racemase/muconate lactonizing enzyme family. MenC type 1 subfamily. A divalent metal cation is required as a cofactor.

It catalyses the reaction (1R,6R)-6-hydroxy-2-succinyl-cyclohexa-2,4-diene-1-carboxylate = 2-succinylbenzoate + H2O. It participates in quinol/quinone metabolism; 1,4-dihydroxy-2-naphthoate biosynthesis; 1,4-dihydroxy-2-naphthoate from chorismate: step 4/7. It functions in the pathway quinol/quinone metabolism; menaquinone biosynthesis. Functionally, converts 2-succinyl-6-hydroxy-2,4-cyclohexadiene-1-carboxylate (SHCHC) to 2-succinylbenzoate (OSB). This Yersinia pseudotuberculosis serotype O:3 (strain YPIII) protein is o-succinylbenzoate synthase.